The sequence spans 330 residues: tRNA U34 carboxymethyltransferase (330 aa).

Carboxy-S-adenosyl-L-methionine is bound by residues Lys91, Trp105, Lys110, Gly130, 152-154, 181-182, Met196, Tyr200, and Arg315; these read DPS and IE.

This sequence belongs to the class I-like SAM-binding methyltransferase superfamily. CmoB family. In terms of assembly, homotetramer.

It catalyses the reaction carboxy-S-adenosyl-L-methionine + 5-hydroxyuridine(34) in tRNA = 5-carboxymethoxyuridine(34) in tRNA + S-adenosyl-L-homocysteine + H(+). In terms of biological role, catalyzes carboxymethyl transfer from carboxy-S-adenosyl-L-methionine (Cx-SAM) to 5-hydroxyuridine (ho5U) to form 5-carboxymethoxyuridine (cmo5U) at position 34 in tRNAs. This chain is tRNA U34 carboxymethyltransferase, found in Shewanella sediminis (strain HAW-EB3).